The primary structure comprises 458 residues: MTVIALAAGKGTRMKSPLPKVLHPVAGRPMIEKVIQASKQAGAAEVRVIVGHGQNLVRQVVEPMGVACYVQDEQLGTAHAVRCAKPETIEGVVVIMNGDHPLIEASDIKDFVRIFRDEKCDLAVVTAVLKNPGEFGRIVRHKGDLAAIVEAKDASAEALKIREINTGIYIVKASVLSEYLPQISNNNAKKEYYITDLIALCIQDKCRVQAIQSTPKVAVGVNNQLELARATRLLFKRKALRLMEDGVLMIDPRTVYVEESVEIGAGTVIYPNVFIRGRTKIGSFTVIESNAFISDCEIGDSVQIRGGSYLESSKLHNKVSAGPYARLRPETEIFEEAHVGNFVEMKKVKFGKKSKAGHLTYLGDAEIGEEVNVGCGTITCNYAADKKKYKTKIGNRVFVGSDTQFVAPIEVGDDAIIGSGSTITKNVPAKALAVARGKQFIKENYSAKTAETEEKEQV.

The tract at residues 1–224 (MTVIALAAGK…PKVAVGVNNQ (224 aa)) is pyrophosphorylase. UDP-N-acetyl-alpha-D-glucosamine contacts are provided by residues 6–9 (LAAG), lysine 20, glutamine 71, and 76–77 (GT). Aspartate 99 serves as a coordination point for Mg(2+). Residues glycine 136, glutamate 150, asparagine 165, and asparagine 222 each contribute to the UDP-N-acetyl-alpha-D-glucosamine site. Asparagine 222 lines the Mg(2+) pocket. Residues 225 to 245 (LELARATRLLFKRKALRLMED) form a linker region. The interval 246–458 (GVLMIDPRTV…TAETEEKEQV (213 aa)) is N-acetyltransferase. UDP-N-acetyl-alpha-D-glucosamine contacts are provided by arginine 328 and lysine 346. Histidine 358 functions as the Proton acceptor in the catalytic mechanism. UDP-N-acetyl-alpha-D-glucosamine is bound by residues tyrosine 361 and asparagine 372. Acetyl-CoA-binding positions include 381–382 (NY), serine 401, serine 419, and arginine 436.

This sequence in the N-terminal section; belongs to the N-acetylglucosamine-1-phosphate uridyltransferase family. In the C-terminal section; belongs to the transferase hexapeptide repeat family. As to quaternary structure, homotrimer. The cofactor is Mg(2+).

It is found in the cytoplasm. It carries out the reaction alpha-D-glucosamine 1-phosphate + acetyl-CoA = N-acetyl-alpha-D-glucosamine 1-phosphate + CoA + H(+). The enzyme catalyses N-acetyl-alpha-D-glucosamine 1-phosphate + UTP + H(+) = UDP-N-acetyl-alpha-D-glucosamine + diphosphate. The protein operates within nucleotide-sugar biosynthesis; UDP-N-acetyl-alpha-D-glucosamine biosynthesis; N-acetyl-alpha-D-glucosamine 1-phosphate from alpha-D-glucosamine 6-phosphate (route II): step 2/2. Its pathway is nucleotide-sugar biosynthesis; UDP-N-acetyl-alpha-D-glucosamine biosynthesis; UDP-N-acetyl-alpha-D-glucosamine from N-acetyl-alpha-D-glucosamine 1-phosphate: step 1/1. It participates in bacterial outer membrane biogenesis; LPS lipid A biosynthesis. In terms of biological role, catalyzes the last two sequential reactions in the de novo biosynthetic pathway for UDP-N-acetylglucosamine (UDP-GlcNAc). The C-terminal domain catalyzes the transfer of acetyl group from acetyl coenzyme A to glucosamine-1-phosphate (GlcN-1-P) to produce N-acetylglucosamine-1-phosphate (GlcNAc-1-P), which is converted into UDP-GlcNAc by the transfer of uridine 5-monophosphate (from uridine 5-triphosphate), a reaction catalyzed by the N-terminal domain. This Bdellovibrio bacteriovorus (strain ATCC 15356 / DSM 50701 / NCIMB 9529 / HD100) protein is Bifunctional protein GlmU.